The primary structure comprises 366 residues: DNA primase large subunit PriL (366 aa).

C227, C298, C307, and C314 together coordinate [4Fe-4S] cluster.

Belongs to the eukaryotic-type primase large subunit family. Heterodimer of a small subunit (PriS) and a large subunit (PriL). [4Fe-4S] cluster serves as cofactor.

In terms of biological role, regulatory subunit of DNA primase, an RNA polymerase that catalyzes the synthesis of short RNA molecules used as primers for DNA polymerase during DNA replication. Stabilizes and modulates the activity of the small subunit, increasing the rate of DNA synthesis, and conferring RNA synthesis capability. The DNA polymerase activity may enable DNA primase to also catalyze primer extension after primer synthesis. May also play a role in DNA repair. This chain is DNA primase large subunit PriL, found in Methanocella arvoryzae (strain DSM 22066 / NBRC 105507 / MRE50).